Consider the following 109-residue polypeptide: uncharacterized protein (109 aa).

This is an uncharacterized protein from Escherichia coli (strain K12).